The chain runs to 341 residues: Farnesyl pyrophosphate synthase (341 aa).

Lys48, Arg51, and Gln86 together coordinate isopentenyl diphosphate. 2 residues coordinate Mg(2+): Asp93 and Asp97. Arg102 is a dimethylallyl diphosphate binding site. Arg103 lines the isopentenyl diphosphate pocket. Positions 190, 191, 229, and 246 each coordinate dimethylallyl diphosphate.

This sequence belongs to the FPP/GGPP synthase family. The cofactor is Mg(2+).

It localises to the cytoplasm. The enzyme catalyses isopentenyl diphosphate + dimethylallyl diphosphate = (2E)-geranyl diphosphate + diphosphate. The catalysed reaction is isopentenyl diphosphate + (2E)-geranyl diphosphate = (2E,6E)-farnesyl diphosphate + diphosphate. The protein operates within isoprenoid biosynthesis; farnesyl diphosphate biosynthesis; farnesyl diphosphate from geranyl diphosphate and isopentenyl diphosphate: step 1/1. It functions in the pathway isoprenoid biosynthesis; geranyl diphosphate biosynthesis; geranyl diphosphate from dimethylallyl diphosphate and isopentenyl diphosphate: step 1/1. Its function is as follows. Catalyzes the sequential condensation of isopentenyl pyrophosphate with the allylic pyrophosphates, dimethylallyl pyrophosphate, and then with the resultant geranylpyrophosphate to the ultimate product farnesyl pyrophosphate. The protein is Farnesyl pyrophosphate synthase (FPS1) of Helianthus annuus (Common sunflower).